The primary structure comprises 929 residues: MWARLLLHVAYILIPLLGSSARGYTGRKAPGHYSAERRRLGPHVCLSGFGSGCCPGWAPSMGSGHCTLPLCSFGCGSGICIAPNVCSCQDGEQGATCPEAHGSCGEYGCDLTCNHGGCQEVARVCPVGFLMTETAVGIRCADIDECLSSSCEGHCVNTEGGFVCECGPGMQLSADRHSCQDTDECLGTPCQQRCKNSIGSYKCSCRAGFHLHGNRHSCIDVNECRRPQERRVCHHTCHNTVGSFLCTCRPGFRLRSDRVSCEAFPKAVLAPSAILQPRQHPAKMSLLLPEAGRPALSPGHSPPPGAPGYPTGVRTISQPSTTQVLPTFFPTQLISTPVPSSSPLGTLGPPSLLQGAVGTPSSPRGPESPKLGAGSSSCWHLGATYESGSRWNQPGCSQCLCQDGEVTCGGVRCDATCSHPVPPRDGGCCPSCTGCFHSGAIRAEGDVFSPPEENCTVCVCLAGNVSCISPECPPGPCKASPQSDCCTCVPGRCYFHGRWYTDGAVFSGGGDDCTTCVCQNGEVECSFTPCPELECPREEWLLGPGQCCFTCREPTPTTGCSLDDNGVEFPIGQIWSPGDPCELCVCQADGSVSCKRTDCVDSCPHPIRIPGQCCPDCSAGCTYTGRIFYNNETFPSVLDPCLSCICLLGSVACSPVDCPITCTYPFHPDGECCPVCHDCNFEGRKVVNGQVFTLDDEPCTRCICQLGEVSCETVPCRPICTDPSCPDSVFPLEEKQQPSPHGELAKAARNARGDTEVPVNCSSCPGPPSASPTRPMVHLLQRLLRTNLSNIQSASPSPPIAQTSSSPLLEPEGISLGKPRASQPPEPSAGSPVSPRLSTLPPAIPGTPLSPVTPESSSSTFGTQTAFQWLLSATPLTEAETPSMTNADLSETLTTSSSSQRLSAALPDTPNPVPQQSTIDTPKKENSTI.

Positions 1 to 21 are cleaved as a signal peptide; sequence MWARLLLHVAYILIPLLGSSA. The region spanning 70–98 is the EGF-like 1 domain; it reads LCSFGCGSGICIAPNVCSCQDGEQGATCP. Residues 142–180 form the EGF-like 2; calcium-binding domain; that stretch reads DIDECLSSSCEGHCVNTEGGFVCECGPGMQLSADRHSCQ. Cystine bridges form between cysteine 146–cysteine 155, cysteine 151–cysteine 164, cysteine 166–cysteine 179, cysteine 185–cysteine 194, cysteine 190–cysteine 203, cysteine 205–cysteine 218, cysteine 224–cysteine 237, cysteine 233–cysteine 246, and cysteine 248–cysteine 261. One can recognise an EGF-like 3; calcium-binding domain in the interval 181 to 219; it reads DTDECLGTPCQQRCKNSIGSYKCSCRAGFHLHGNRHSCI. An EGF-like 4; calcium-binding domain is found at 220–262; it reads DVNECRRPQERRVCHHTCHNTVGSFLCTCRPGFRLRSDRVSCE. Disordered regions lie at residues 291–317 and 339–374; these read AGRPALSPGHSPPPGAPGYPTGVRTIS and PSSSPLGTLGPPSLLQGAVGTPSSPRGPESPKLGAG. Over residues 339–353 the composition is skewed to low complexity; sequence PSSSPLGTLGPPSLL. VWFC domains follow at residues 376–433, 433–494, 491–552, 558–618, 619–677, and 677–762; these read SSCW…PSCT, TGCF…GRCY, GRCY…FTCR, TGCS…PDCS, AGCT…PVCH, and HDCN…VNCS. 2 N-linked (GlcNAc...) asparagine glycosylation sites follow: asparagine 454 and asparagine 464. Residues 731–774 are disordered; sequence PLEEKQQPSPHGELAKAARNARGDTEVPVNCSSCPGPPSASPTR. Residues 743-755 are compositionally biased toward basic and acidic residues; that stretch reads ELAKAARNARGDT. The N-linked (GlcNAc...) asparagine glycan is linked to asparagine 787. A compositionally biased stretch (polar residues) spans 791 to 807; sequence IQSASPSPPIAQTSSSP. 2 disordered regions span residues 791–861 and 879–929; these read IQSA…SSTF and AETP…NSTI. Positions 889 to 903 are enriched in low complexity; that stretch reads LSETLTTSSSSQRLS.

The protein resides in the secreted. Functionally, may be a regulatory element in the beta-catenin signaling pathway and a target for chemoprevention of hapatocellular carcinoma. This chain is von Willebrand factor C and EGF domain-containing protein (Vwce), found in Mus musculus (Mouse).